The following is a 106-amino-acid chain: Large ribosomal subunit protein bL21 (106 aa).

The protein belongs to the bacterial ribosomal protein bL21 family. As to quaternary structure, part of the 50S ribosomal subunit. Contacts protein L20.

In terms of biological role, this protein binds to 23S rRNA in the presence of protein L20. The chain is Large ribosomal subunit protein bL21 from Xanthomonas campestris pv. campestris (strain ATCC 33913 / DSM 3586 / NCPPB 528 / LMG 568 / P 25).